Reading from the N-terminus, the 1062-residue chain is Translation initiation factor IF-2 (1062 aa).

The tract at residues 34–463 is disordered; it reads SASSTVEAPV…RMGAMVPRGN (430 aa). Positions 76–121 are enriched in pro residues; the sequence is PTPPSRPGLAPRPGPRPVPGRPGPLGRPGPATPAPSPSPASPPLPA. Over residues 122–153 the composition is skewed to low complexity; that stretch reads SPVQASPVQASPVQASPTSAPAAPRPAAASAV. A compositionally biased stretch (pro residues) spans 154 to 178; that stretch reads PAPPMPSVPSAPSGPRPGPNAPRPG. Gly residues predominate over residues 198 to 214; sequence TAGGPTAGGPTAGGPTA. The segment covering 294–305 has biased composition (pro residues); the sequence is RPTPGGMPPRPG. Composition is skewed to gly residues over residues 307–324 and 344–430; these read PRSG…GTGG and PGGG…GGRG. Positions 431-442 are enriched in basic residues; that stretch reads RPGRQRKSKRAK. The region spanning 555–727 is the tr-type G domain; it reads SRPPVVTVMG…IVLTADASLD (173 aa). The segment at 564 to 571 is G1; the sequence is GHVDHGKT. 564 to 571 serves as a coordination point for GTP; the sequence is GHVDHGKT. The segment at 589–593 is G2; that stretch reads GITQH. The segment at 614–617 is G3; it reads DTPG. GTP is bound by residues 614–618 and 668–671; these read DTPGH and NKVD. The interval 668 to 671 is G4; sequence NKVD. The segment at 704 to 706 is G5; it reads SAR.

Belongs to the TRAFAC class translation factor GTPase superfamily. Classic translation factor GTPase family. IF-2 subfamily.

The protein localises to the cytoplasm. Its function is as follows. One of the essential components for the initiation of protein synthesis. Protects formylmethionyl-tRNA from spontaneous hydrolysis and promotes its binding to the 30S ribosomal subunits. Also involved in the hydrolysis of GTP during the formation of the 70S ribosomal complex. In Frankia casuarinae (strain DSM 45818 / CECT 9043 / HFP020203 / CcI3), this protein is Translation initiation factor IF-2.